The chain runs to 1004 residues: Putative helicase MOV-10 (1004 aa).

Lys-148 carries the N6-acetyllysine modification. Thr-254 is modified (phosphothreonine). The residue at position 433 (Ser-433) is a Phosphoserine. 525 to 532 serves as a coordination point for ATP; that stretch reads GPPGTGKT. Residues 646–649 carry the DEAG box motif; sequence DEAG. Residues 922-966 are interaction with AGO2 and APOBEC3G; that stretch reads NPLLLGHDPDWKTFLEFCKENGGYTGCPFPAKLDLQQGQDLLQGL. The disordered stretch occupies residues 966 to 1004; it reads LSKLSPSTSGPRRHQNLPQEREGEGGLPLQVEPEWRNEL. Ser-970 carries the phosphoserine modification.

The protein belongs to the DNA2/NAM7 helicase family. SDE3 subfamily. Interacts with DICER1, AGO2, TARBP2, EIF6 and RPL7A (60S ribosome subunit); they form a large RNA-induced silencing complex (RISC). Interacts with APOBEC3G in an RNA-dependent manner. Interacts with TRIM71 (via NHL repeats) in an RNA-dependent manner. Interacts with both protein products of LIRE1, ORF1p and ORF2p. Interacts with TUT4 and, to a lesser extent, TUT7; the interactions are RNA-dependent. Interacts with AGO2, TNRC6B and UPF1; the interactions are direct and RNA-dependent. Interacts with FMR1; this interaction is direct, occurs in an RNA-dependent manner on polysomes and induces association of MOV10 with RNAs. Interacts with SHFL; the interaction increases in presence of RNA. Interacts with DHX34; the interaction is RNA-independent. Interacts with RBM46. In terms of processing, ubiquitinated by the DCX(DCAF12) complex that specifically recognizes the glutamate-leucine (Glu-Leu) degron at the C-terminus, leading to its degradation.

The protein localises to the cytoplasm. Its subcellular location is the P-body. It localises to the nucleus. It is found in the cytoplasmic ribonucleoprotein granule. The protein resides in the stress granule. The enzyme catalyses ATP + H2O = ADP + phosphate + H(+). In terms of biological role, 5' to 3' RNA helicase that is involved in a number of cellular roles ranging from mRNA metabolism and translation, modulation of viral infectivity, inhibition of retrotransposition, or regulation of synaptic transmission. Plays an important role in innate antiviral immunity by promoting type I interferon production. Mechanistically, specifically uses IKKepsilon/IKBKE as the mediator kinase for IRF3 activation. Contributes to UPF1 mRNA target degradation by translocation along 3' UTRs. Required for microRNA (miRNA)-mediated gene silencing by the RNA-induced silencing complex (RISC). Required for both miRNA-mediated translational repression and miRNA-mediated cleavage of complementary mRNAs by RISC. In cooperation with FMR1, regulates miRNA-mediated translational repression by AGO2. Restricts retrotransposition of long interspersed element-1 (LINE-1) in cooperation with TUT4 and TUT7 counteracting the RNA chaperonne activity of L1RE1. Facilitates LINE-1 uridylation by TUT4 and TUT7. Required for embryonic viability and for normal central nervous system development and function. Plays two critical roles in early brain development: suppresses retroelements in the nucleus by directly inhibiting cDNA synthesis, while regulates cytoskeletal mRNAs to influence neurite outgrowth in the cytosol. May function as a messenger ribonucleoprotein (mRNP) clearance factor. The sequence is that of Putative helicase MOV-10 (Mov10) from Mus musculus (Mouse).